A 719-amino-acid chain; its full sequence is 2'-5'-oligoadenylate synthase 2 (719 aa).

Gly2 carries the N-myristoyl glycine lipid modification. 2 OAS domain regions span residues Val11–Val335 and Thr343–Pro683. Lys378 carries the post-translational modification N6-acetyllysine. Ser396 lines the ATP pocket. 3 residues coordinate Mg(2+): Asp408, Asp410, and Asp481. ATP contacts are provided by Arg544 and Lys547.

It belongs to the 2-5A synthase family. In terms of assembly, homodimer. Mg(2+) serves as cofactor. Myristoylation is not essential for its activity. Post-translationally, glycosylated. Glycosylation is essential for its activity.

It localises to the cytoplasm. The protein resides in the perinuclear region. It catalyses the reaction 3 ATP = 5'-triphosphoadenylyl-(2'-&gt;5')-adenylyl-(2'-&gt;5')-adenosine + 2 diphosphate. Its activity is regulated as follows. Produced as a latent enzyme which is activated by double stranded RNA (dsRNA) generated during the course of viral infection. The dsRNA activator must be at least 15 nucleotides long, and no modification of the 2'-hydroxyl group is tolerated. ssRNA or dsDNA do not act as activators. Strongly inhibited by copper, iron and zinc ions. Partially inhibited by cobalt and nickel ions. Its function is as follows. Interferon-induced, dsRNA-activated antiviral enzyme which plays a critical role in cellular innate antiviral response. Activated by detection of double stranded RNA (dsRNA): polymerizes higher oligomers of 2'-5'-oligoadenylates (2-5A) from ATP which then bind to the inactive monomeric form of ribonuclease L (RNASEL) leading to its dimerization and subsequent activation. Activation of RNASEL leads to degradation of cellular as well as viral RNA, resulting in the inhibition of protein synthesis, thus terminating viral replication. Can mediate the antiviral effect via the classical RNASEL-dependent pathway or an alternative antiviral pathway independent of RNASEL. In addition, it may also play a role in other cellular processes such as apoptosis, cell growth, differentiation and gene regulation. May act as a negative regulator of lactation, stopping lactation in virally infected mammary gland lobules, thereby preventing transmission of viruses to neonates. Non-infected lobules would not be affected, allowing efficient pup feeding during infection. The sequence is that of 2'-5'-oligoadenylate synthase 2 from Homo sapiens (Human).